Reading from the N-terminus, the 281-residue chain is DegV domain-containing protein (281 aa).

One can recognise a DegV domain in the interval 3–280; the sequence is WKIVSDSGCD…EGGLLMGYEI (278 aa). Ser63 and Ser91 together coordinate hexadecanoate.

May bind long-chain fatty acids, such as palmitate, and may play a role in lipid transport or fatty acid metabolism. The sequence is that of DegV domain-containing protein from Streptococcus gordonii.